Here is a 185-residue protein sequence, read N- to C-terminus: Elongation factor P (185 aa).

It belongs to the elongation factor P family.

Its subcellular location is the cytoplasm. It participates in protein biosynthesis; polypeptide chain elongation. In terms of biological role, involved in peptide bond synthesis. Stimulates efficient translation and peptide-bond synthesis on native or reconstituted 70S ribosomes in vitro. Probably functions indirectly by altering the affinity of the ribosome for aminoacyl-tRNA, thus increasing their reactivity as acceptors for peptidyl transferase. In Bordetella bronchiseptica (strain ATCC BAA-588 / NCTC 13252 / RB50) (Alcaligenes bronchisepticus), this protein is Elongation factor P.